A 204-amino-acid chain; its full sequence is Pyrrolidone-carboxylate peptidase (204 aa).

Residues glutamate 80, cysteine 142, and histidine 165 contribute to the active site.

The protein belongs to the peptidase C15 family. In terms of assembly, homotetramer.

The protein localises to the cytoplasm. The catalysed reaction is Release of an N-terminal pyroglutamyl group from a polypeptide, the second amino acid generally not being Pro.. Functionally, removes 5-oxoproline from various penultimate amino acid residues except L-proline. In Lysinibacillus sphaericus (strain C3-41), this protein is Pyrrolidone-carboxylate peptidase.